The chain runs to 112 residues: Mu-ctenitoxin-Pn1a (112 aa).

The signal sequence occupies residues 1 to 19; sequence MKLLGIFLVASFAFVLSFG. Positions 20 to 33 are excised as a propeptide; the sequence is EEMIEGENPLEDQR. Cystine bridges form between C39/C56, C46/C62, C53/C85, C55/C73, C64/C71, C91/C106, and C102/C110. The residue at position 111 (G111) is a Glycine amide.

It belongs to the neurotoxin 04 (omega-agtx) family. 02 (Tx1) subfamily. Post-translationally, contains 7 disulfide bonds. In terms of tissue distribution, expressed by the venom gland.

The protein resides in the secreted. Its function is as follows. Reversible inhibitor of neuronal sodium channels (Nav1.2/ SCN2A) that binds in proximity to site 1 and displays increasing affinity as the membrane potential is depolarized. Induces excitatory symptoms and spastic paralysis in mice. The polypeptide is Mu-ctenitoxin-Pn1a (Phoneutria nigriventer (Brazilian armed spider)).